A 61-amino-acid polypeptide reads, in one-letter code: MMNRLLVFLMLGAFMLVVSANDAYGGDESLGKRKSCCPCWLGGNCFWGQNCYPQGCSGPKV.

The first 20 residues, 1–20, serve as a signal peptide directing secretion; it reads MMNRLLVFLMLGAFMLVVSA. Positions 21–31 are excised as a propeptide; sequence NDAYGGDESLG. Cystine bridges form between Cys36–Cys51, Cys37–Cys45, and Cys39–Cys56.

Belongs to the sea anemone short toxin (type III) family.

The protein localises to the secreted. It localises to the nematocyst. In terms of biological role, sodium channel inhibitor. 5 uM completely inhibits voltage-gated sodium channel (Nav) inactivation. The protein is Delta-actitoxin-Avd2c of Anemonia viridis (Snakelocks anemone).